Reading from the N-terminus, the 1086-residue chain is ATP-dependent helicase/deoxyribonuclease subunit B (1086 aa).

It belongs to the helicase family. AddB/RexB type 2 subfamily. As to quaternary structure, heterodimer of AddA and RexB. It depends on Mg(2+) as a cofactor.

The heterodimer acts as both an ATP-dependent DNA helicase and an ATP-dependent, dual-direction single-stranded exonuclease. Recognizes the chi site generating a DNA molecule suitable for the initiation of homologous recombination. This subunit has 5' -&gt; 3' nuclease activity but not helicase activity. This Streptococcus uberis (strain ATCC BAA-854 / 0140J) protein is ATP-dependent helicase/deoxyribonuclease subunit B.